Here is a 435-residue protein sequence, read N- to C-terminus: MNYIEEKVNRARSVLRELTSLKTSVKNETLLKVAELIDKNRDYIKEENRKDVEKAKEMGLRPAVVDRLVLNDKRIDGMVKVLKDVASLPDPVGEIIKMWNLPNGLKVGRMRVPLGVIFIVYESRPNVTIEASSLCMKSSNAVILRGGKEAINSNKALVNLIKEACRETGFPEDAVQFIDRSEREIVWEILKMEGKIDVAIPRGGESLIRAVVEHAKVPVIKHYKGVCNIYVDDEADLEKAYHIVYNAKVQRPSVCNAVENLVINRKILKEFFPKMAYYLGKAGVELRCDEESLQVIKENPKLSFVNAKPATEEDYYEEFLDLILAVKVVDDVDEAIAFIEKYGSKHSDAIITENYTKAMKFLREVDSAAVYVNASTRFTDGNEFGLGAEMGISTDKIHARGPMALEELTIPKFVILGEGQVRDNFGVPEEWMKEF.

The protein belongs to the gamma-glutamyl phosphate reductase family.

It localises to the cytoplasm. It catalyses the reaction L-glutamate 5-semialdehyde + phosphate + NADP(+) = L-glutamyl 5-phosphate + NADPH + H(+). The protein operates within amino-acid biosynthesis; L-proline biosynthesis; L-glutamate 5-semialdehyde from L-glutamate: step 2/2. In terms of biological role, catalyzes the NADPH-dependent reduction of L-glutamate 5-phosphate into L-glutamate 5-semialdehyde and phosphate. The product spontaneously undergoes cyclization to form 1-pyrroline-5-carboxylate. This is Gamma-glutamyl phosphate reductase from Aquifex aeolicus (strain VF5).